Here is a 223-residue protein sequence, read N- to C-terminus: 2-C-methyl-D-erythritol 4-phosphate cytidylyltransferase (223 aa).

It belongs to the IspD/TarI cytidylyltransferase family. IspD subfamily.

It catalyses the reaction 2-C-methyl-D-erythritol 4-phosphate + CTP + H(+) = 4-CDP-2-C-methyl-D-erythritol + diphosphate. Its pathway is isoprenoid biosynthesis; isopentenyl diphosphate biosynthesis via DXP pathway; isopentenyl diphosphate from 1-deoxy-D-xylulose 5-phosphate: step 2/6. Catalyzes the formation of 4-diphosphocytidyl-2-C-methyl-D-erythritol from CTP and 2-C-methyl-D-erythritol 4-phosphate (MEP). This Prochlorococcus marinus (strain MIT 9301) protein is 2-C-methyl-D-erythritol 4-phosphate cytidylyltransferase.